Here is a 753-residue protein sequence, read N- to C-terminus: Nigerose phosphorylase (753 aa).

Residue 348-349 participates in substrate binding; that stretch reads WD. Glu490 serves as the catalytic Proton donor. 604–605 is a binding site for substrate; the sequence is KQ.

Belongs to the glycosyl hydrolase 65 family. In terms of assembly, homodimer.

Its subcellular location is the cytoplasm. The catalysed reaction is nigerose + phosphate = beta-D-glucose 1-phosphate + D-glucose. With respect to regulation, does not require divalent metal ions. Its function is as follows. Catalyzes the reversible phosphorolysis of nigerose. Also shows a weak activity on kojibiose. This Lachnoclostridium phytofermentans (strain ATCC 700394 / DSM 18823 / ISDg) (Clostridium phytofermentans) protein is Nigerose phosphorylase.